Reading from the N-terminus, the 385-residue chain is Mannitol-1-phosphate 5-dehydrogenase (385 aa).

3 to 14 (ALQFGAGNIGRG) lines the NAD(+) pocket.

The protein belongs to the mannitol dehydrogenase family.

The catalysed reaction is D-mannitol 1-phosphate + NAD(+) = beta-D-fructose 6-phosphate + NADH + H(+). The polypeptide is Mannitol-1-phosphate 5-dehydrogenase (Buchnera aphidicola subsp. Acyrthosiphon pisum (strain Tuc7)).